A 348-amino-acid chain; its full sequence is Selenide, water dikinase (348 aa).

C17 is a catalytic residue. Residues K20 and 48 to 50 (TRD) contribute to the ATP site. D51 contacts Mg(2+). ATP contacts are provided by residues D68, D91, and 139 to 141 (GHS). D91 is a Mg(2+) binding site. D227 lines the Mg(2+) pocket.

It belongs to the selenophosphate synthase 1 family. Class I subfamily. Homodimer. Mg(2+) is required as a cofactor.

It catalyses the reaction hydrogenselenide + ATP + H2O = selenophosphate + AMP + phosphate + 2 H(+). Its function is as follows. Synthesizes selenophosphate from selenide and ATP. This Yersinia pestis protein is Selenide, water dikinase.